The following is a 532-amino-acid chain: BEL1-like homeodomain protein 6 (532 aa).

Positions 144-160 (SKYLKAAQQLLDEAVNV) are SR/KY domain. Positions 170 to 203 (EGDKNNENPQEPNQSTQDSSTNPPADISQSERQE) are disordered. The span at 176–197 (ENPQEPNQSTQDSSTNPPADIS) shows a compositional bias: polar residues. The segment at 200 to 271 (ERQEMQSKLT…SLRDAISGQI (72 aa)) is BELL domain. Residues 314 to 376 (AWRPQRGLPE…NARVRLWKPM (63 aa)) constitute a DNA-binding region (homeobox). The disordered stretch occupies residues 385–434 (FTENDSNSSSENTPKMSEIGPVAADDEDRAREFSQDQTKPDHGHGYGEET). Residues 412 to 434 (DRAREFSQDQTKPDHGHGYGEET) show a composition bias toward basic and acidic residues.

This sequence belongs to the TALE/BELL homeobox family. May form heterodimeric complexes with TALE/KNOX proteins. Interacts with OFP2, OFP4, and OFP5.

The protein resides in the nucleus. The chain is BEL1-like homeodomain protein 6 (BLH6) from Arabidopsis thaliana (Mouse-ear cress).